The sequence spans 375 residues: DNA replication and repair protein RecF (375 aa).

30-37 (GDNAQGKS) lines the ATP pocket.

It belongs to the RecF family.

It is found in the cytoplasm. Its function is as follows. The RecF protein is involved in DNA metabolism; it is required for DNA replication and normal SOS inducibility. RecF binds preferentially to single-stranded, linear DNA. It also seems to bind ATP. In Gloeobacter violaceus (strain ATCC 29082 / PCC 7421), this protein is DNA replication and repair protein RecF.